The sequence spans 365 residues: Probable L-tyrosine/L-aspartate decarboxylase (365 aa).

Lys-225 carries the N6-(pyridoxal phosphate)lysine modification.

The protein belongs to the group II decarboxylase family. MfnA subfamily. Pyridoxal 5'-phosphate serves as cofactor.

The catalysed reaction is L-tyrosine + H(+) = tyramine + CO2. It catalyses the reaction L-aspartate + H(+) = beta-alanine + CO2. It participates in cofactor biosynthesis; methanofuran biosynthesis. It functions in the pathway cofactor biosynthesis; coenzyme A biosynthesis. Catalyzes the decarboxylation of L-tyrosine to produce tyramine for methanofuran biosynthesis. Can also catalyze the decarboxylation of L-aspartate to produce beta-alanine for coenzyme A (CoA) biosynthesis. This is Probable L-tyrosine/L-aspartate decarboxylase from Methanocorpusculum labreanum (strain ATCC 43576 / DSM 4855 / Z).